The chain runs to 262 residues: 3-methyl-2-oxobutanoate hydroxymethyltransferase (262 aa).

D42 and D81 together coordinate Mg(2+). Residues D42–S43, D81, and K110 each bind 3-methyl-2-oxobutanoate. Position 112 (E112) interacts with Mg(2+). E180 serves as the catalytic Proton acceptor.

It belongs to the PanB family. As to quaternary structure, homodecamer; pentamer of dimers. Mg(2+) is required as a cofactor.

The protein localises to the cytoplasm. The catalysed reaction is 3-methyl-2-oxobutanoate + (6R)-5,10-methylene-5,6,7,8-tetrahydrofolate + H2O = 2-dehydropantoate + (6S)-5,6,7,8-tetrahydrofolate. Its pathway is cofactor biosynthesis; (R)-pantothenate biosynthesis; (R)-pantoate from 3-methyl-2-oxobutanoate: step 1/2. In terms of biological role, catalyzes the reversible reaction in which hydroxymethyl group from 5,10-methylenetetrahydrofolate is transferred onto alpha-ketoisovalerate to form ketopantoate. The protein is 3-methyl-2-oxobutanoate hydroxymethyltransferase of Legionella pneumophila subsp. pneumophila (strain Philadelphia 1 / ATCC 33152 / DSM 7513).